Here is a 507-residue protein sequence, read N- to C-terminus: ATP synthase subunit alpha (507 aa).

An ATP-binding site is contributed by 168–175; that stretch reads GDRKTGKT.

It belongs to the ATPase alpha/beta chains family. F-type ATPases have 2 components, CF(1) - the catalytic core - and CF(0) - the membrane proton channel. CF(1) has five subunits: alpha(3), beta(3), gamma(1), delta(1), epsilon(1). CF(0) has three main subunits: a(1), b(2) and c(9-12). The alpha and beta chains form an alternating ring which encloses part of the gamma chain. CF(1) is attached to CF(0) by a central stalk formed by the gamma and epsilon chains, while a peripheral stalk is formed by the delta and b chains.

Its subcellular location is the cell inner membrane. The catalysed reaction is ATP + H2O + 4 H(+)(in) = ADP + phosphate + 5 H(+)(out). Produces ATP from ADP in the presence of a proton gradient across the membrane. The alpha chain is a regulatory subunit. The sequence is that of ATP synthase subunit alpha from Ehrlichia ruminantium (strain Gardel).